Consider the following 146-residue polypeptide: Vascular endothelial growth factor A (146 aa).

Residues 1-26 (MNFLLSWVHWSLALLLYLHHAKWSQA) form the signal peptide. 3 disulfides stabilise this stretch: Cys-51/Cys-93, Cys-82/Cys-127, and Cys-86/Cys-129. Asn-100 is a glycosylation site (N-linked (GlcNAc...) asparagine).

This sequence belongs to the PDGF/VEGF growth factor family. As to quaternary structure, homodimer; disulfide-linked. Also found as heterodimer with PGF. Interacts with NRP1. Interacts with isoform 2 of BSG. Interacts with CD82; this interaction inhibits VEGFA-mediated signaling pathway.

Functionally, growth factor active in angiogenesis, vasculogenesis and endothelial cell growth. Induces endothelial cell proliferation, promotes cell migration, inhibits apoptosis and induces permeabilization of blood vessels. Binds to the FLT1/VEGFR1 and KDR/VEGFR2 receptors, heparan sulfate and heparin. Binding to NRP1 receptor initiates a signaling pathway needed for motor neuron axon guidance and cell body migration, including for the caudal migration of facial motor neurons from rhombomere 4 to rhombomere 6 during embryonic development. Also binds the DEAR/FBXW7-AS1 receptor. The polypeptide is Vascular endothelial growth factor A (VEGFA) (Ovis aries (Sheep)).